An 844-amino-acid polypeptide reads, in one-letter code: Translation initiation factor IF-2 (844 aa).

The span at 1–11 (MTEDVKADVPK) shows a compositional bias: basic and acidic residues. Disordered stretches follow at residues 1-35 (MTED…SKAV) and 79-248 (RLEA…KGAA). Over residues 21–33 (TTVSGTTTSGKSK) the composition is skewed to low complexity. Residues 79–161 (RLEAEKAATK…AAEEAKRYAE (83 aa)) are compositionally biased toward basic and acidic residues. A compositionally biased stretch (acidic residues) spans 162–175 (ADDSDNESSSEDYS). Basic residues predominate over residues 200–210 (RGKNKVAKAKK). Residues 211-237 (GGRDDENSKNSKNERESNRKNQKDAKF) show a composition bias toward basic and acidic residues. One can recognise a tr-type G domain in the interval 343-513 (TRAPVVTIMG…LLQSEVLELT (171 aa)). The G1 stretch occupies residues 352 to 359 (GHVDHGKT). 352–359 (GHVDHGKT) lines the GTP pocket. Residues 377–381 (GITQH) are G2. The segment at 399–402 (DTPG) is G3. GTP is bound by residues 399–403 (DTPGH) and 453–456 (NKID). The G4 stretch occupies residues 453 to 456 (NKID). The interval 489–491 (SAK) is G5.

The protein belongs to the TRAFAC class translation factor GTPase superfamily. Classic translation factor GTPase family. IF-2 subfamily.

The protein localises to the cytoplasm. Its function is as follows. One of the essential components for the initiation of protein synthesis. Protects formylmethionyl-tRNA from spontaneous hydrolysis and promotes its binding to the 30S ribosomal subunits. Also involved in the hydrolysis of GTP during the formation of the 70S ribosomal complex. This Haemophilus influenzae (strain PittGG) protein is Translation initiation factor IF-2.